Here is a 303-residue protein sequence, read N- to C-terminus: Acetaldehyde dehydrogenase (303 aa).

13-16 (SGNI) contributes to the NAD(+) binding site. The active-site Acyl-thioester intermediate is the Cys-128. NAD(+) is bound by residues 159 to 167 (SAGPGTRQN) and Asn-278.

Belongs to the acetaldehyde dehydrogenase family.

The catalysed reaction is acetaldehyde + NAD(+) + CoA = acetyl-CoA + NADH + H(+). The protein is Acetaldehyde dehydrogenase of Chloroflexus aggregans (strain MD-66 / DSM 9485).